A 113-amino-acid chain; its full sequence is Hydrogenase maturation factor HypA 2 (113 aa).

H2 contacts Ni(2+). Zn(2+) is bound by residues C73, C76, C89, and C92.

This sequence belongs to the HypA/HybF family.

Its function is as follows. Involved in the maturation of [NiFe] hydrogenases. Required for nickel insertion into the metal center of the hydrogenase. The polypeptide is Hydrogenase maturation factor HypA 2 (Bradyrhizobium diazoefficiens (strain JCM 10833 / BCRC 13528 / IAM 13628 / NBRC 14792 / USDA 110)).